Reading from the N-terminus, the 351-residue chain is 3-dehydroquinate synthase (351 aa).

Residues 60-65 (DGEEYK), 94-98 (GVISD), 118-119 (TT), Lys-131, Lys-140, and 158-161 (FLKT) contribute to the NAD(+) site. Glu-173, His-239, and His-256 together coordinate Zn(2+).

It belongs to the sugar phosphate cyclases superfamily. Dehydroquinate synthase family. Co(2+) is required as a cofactor. Zn(2+) serves as cofactor. Requires NAD(+) as cofactor.

The protein localises to the cytoplasm. The enzyme catalyses 7-phospho-2-dehydro-3-deoxy-D-arabino-heptonate = 3-dehydroquinate + phosphate. It participates in metabolic intermediate biosynthesis; chorismate biosynthesis; chorismate from D-erythrose 4-phosphate and phosphoenolpyruvate: step 2/7. In terms of biological role, catalyzes the conversion of 3-deoxy-D-arabino-heptulosonate 7-phosphate (DAHP) to dehydroquinate (DHQ). The polypeptide is 3-dehydroquinate synthase (Campylobacter jejuni subsp. jejuni serotype O:23/36 (strain 81-176)).